The primary structure comprises 155 residues: Endoribonuclease YbeY (155 aa).

His120, His124, and His130 together coordinate Zn(2+).

Belongs to the endoribonuclease YbeY family. Zn(2+) is required as a cofactor.

The protein resides in the cytoplasm. In terms of biological role, single strand-specific metallo-endoribonuclease involved in late-stage 70S ribosome quality control and in maturation of the 3' terminus of the 16S rRNA. The chain is Endoribonuclease YbeY from Staphylococcus aureus (strain Mu3 / ATCC 700698).